The primary structure comprises 1865 residues: Endoribonuclease Dicer (1865 aa).

Residues 41 to 213 (LLEAALEHNT…DLEEKIQNLE (173 aa)) enclose the Helicase ATP-binding domain. 54–61 (LNTGSGKT) is a binding site for ATP. The short motif at 161–164 (DECH) is the DECH box element. The interval 397–417 (SWSDSEDDDEDEEAEAKEKTE) is disordered. The span at 400–411 (DSEDDDEDEEAE) shows a compositional bias: acidic residues. One can recognise a Helicase C-terminal domain in the interval 419 to 588 (NFPSPFTNIL…SAECNDFELE (170 aa)). Residues 616–708 (AIGHVNRYCA…MPVGKETVKY (93 aa)) form the Dicer dsRNA-binding fold domain. The disordered stretch occupies residues 713 to 732 (DLHDEEETSVPGRPGSTKRR). The PAZ domain maps to 881-1028 (KFMEDIEKSE…LVPELCAIHP (148 aa)). Composition is skewed to polar residues over residues 1111–1128 (GTSS…SMEV) and 1192–1201 (STQTTTSVSV). 2 disordered regions span residues 1111-1142 (GTSS…PDEK) and 1190-1259 (DLST…DCRS). The segment covering 1240-1252 (SETATSTPAPSET) has biased composition (low complexity). One can recognise an RNase III 1 domain in the interval 1262–1385 (AGPAWDSPKT…TDKWDSDENK (124 aa)). Mg(2+) is bound by residues Glu1298, Asp1377, and Asp1380. The tract at residues 1373 to 1417 (KSSTDKWDSDENKDLANGKASDDEDEDDDDEPEEAEVEPSKEDVN) is disordered. Over residues 1374-1388 (SSTDKWDSDENKDLA) the composition is skewed to basic and acidic residues. Acidic residues predominate over residues 1394–1409 (DDEDEDDDDEPEEAEV). One can recognise an RNase III 2 domain in the interval 1609–1767 (FLNFESKINY…LAGAIYMDSG (159 aa)). Mg(2+) is bound by residues Glu1648, Asp1753, and Glu1756. Residues 1792-1857 (VPRSPVRELL…ARRALRSLKA (66 aa)) enclose the DRBM domain.

This sequence belongs to the helicase family. Dicer subfamily. In terms of assembly, component of the RISC loading complex (RLC), or micro-RNA (miRNA) loading complex (miRLC), which is composed of dicer1, ago2 and tarbp2; dicer1 and tarbp2 are required to process precursor miRNAs (pre-miRNAs) to mature miRNAs and then load them onto ago2. Note that the trimeric RLC/miRLC is also referred to as RISC. Requires Mg(2+) as cofactor. Mn(2+) is required as a cofactor.

The protein resides in the cytoplasm. The enzyme catalyses Endonucleolytic cleavage to 5'-phosphomonoester.. Its function is as follows. Double-stranded RNA (dsRNA) endoribonuclease playing a central role in short dsRNA-mediated post-transcriptional gene silencing. Cleaves naturally occurring long dsRNAs and short hairpin pre-microRNAs (miRNA) into fragments of twenty-one to twenty-three nucleotides with 3' overhang of two nucleotides, producing respectively short interfering RNAs (siRNA) and mature microRNAs. SiRNAs and miRNAs serve as guide to direct the RNA-induced silencing complex (RISC) to complementary RNAs to degrade them or prevent their translation. Gene silencing mediated by siRNAs, also called RNA interference, controls the elimination of transcripts from mobile and repetitive DNA elements of the genome but also the degradation of exogenous RNA of viral origin for instance. The miRNA pathway on the other side is a mean to specifically regulate the expression of target genes. This is Endoribonuclease Dicer (dicer1) from Danio rerio (Zebrafish).